A 550-amino-acid polypeptide reads, in one-letter code: MTPADLAELLKATAAAVLTEHDLDVAALPATVTVERPRNPEHGDYATNLALQLGKKVGVNPRELAGWLATALTAADGIAVAEVAGPGFVNLRIEASAQGVIITNVLAAEGSYGSSDQYAGRNVNLEFVSANPTGPIHIGGTRWAAVGDALGRLLATQGAAVTREYYFNDHGAQIDRFVNSLIASAKGEPTPEDGYAGDYIVDIAQQVIAKAPDVLGLPEDQQRETFRAIGVDLMFTHIKQSLHDFGTDFDVYTHEDSMHTSGRVDQAITQLREAGSIYEKDGAVWLRTTDFGDDKDRVVIKSDGNAAYIAGDLAYYLDKRKRGFDLCIYMLGADHHGYIARLKAAAAALGDDPDTVEVLIGQMVNLVRDGQPVRMSKRAGTVITLDDLVEAIGVDAARYALIRSSVDTPIDIDLELWSSASNENPVYYVQYAHARLCALARNAADLGVSVNTDHLDLLTHEKEGALIRNLGEFPRVLKTAASLREPHRVCRYLEDLAGDYHRFYDSCRVLPQGDEEPGDLHSARLALCRATRQVIANGLAILGVSAPERM.

Positions 130–140 (ANPTGPIHIGG) match the 'HIGH' region motif.

It belongs to the class-I aminoacyl-tRNA synthetase family. Monomer.

The protein resides in the cytoplasm. It carries out the reaction tRNA(Arg) + L-arginine + ATP = L-arginyl-tRNA(Arg) + AMP + diphosphate. This chain is Arginine--tRNA ligase (argS), found in Mycolicibacterium smegmatis (strain ATCC 700084 / mc(2)155) (Mycobacterium smegmatis).